The sequence spans 328 residues: Glycerol-3-phosphate dehydrogenase [NAD(P)+] (328 aa).

Residues Trp15, His35, Tyr51, and Lys107 each coordinate NADPH. Sn-glycerol 3-phosphate contacts are provided by Lys107, Gly135, and Ser137. Ala139 lines the NADPH pocket. 5 residues coordinate sn-glycerol 3-phosphate: Lys190, Asp243, Ser253, Arg254, and Asn255. The active-site Proton acceptor is Lys190. Arg254 is a binding site for NADPH. Positions 276 and 278 each coordinate NADPH.

It belongs to the NAD-dependent glycerol-3-phosphate dehydrogenase family.

It localises to the cytoplasm. The catalysed reaction is sn-glycerol 3-phosphate + NAD(+) = dihydroxyacetone phosphate + NADH + H(+). The enzyme catalyses sn-glycerol 3-phosphate + NADP(+) = dihydroxyacetone phosphate + NADPH + H(+). It participates in membrane lipid metabolism; glycerophospholipid metabolism. Catalyzes the reduction of the glycolytic intermediate dihydroxyacetone phosphate (DHAP) to sn-glycerol 3-phosphate (G3P), the key precursor for phospholipid synthesis. In Rhodopseudomonas palustris (strain BisA53), this protein is Glycerol-3-phosphate dehydrogenase [NAD(P)+].